A 288-amino-acid polypeptide reads, in one-letter code: N(1)-aminopropylagmatine ureohydrolase (288 aa).

The Mn(2+) site is built by H114, D133, H135, D137, D213, and D215.

It belongs to the arginase family. Requires Mn(2+) as cofactor.

It is found in the cytoplasm. The enzyme catalyses N(1)-(3-aminopropyl)agmatine + H2O = urea + spermidine. The catalysed reaction is agmatine + H2O = urea + putrescine. It participates in amine and polyamine biosynthesis; spermidine biosynthesis. Its function is as follows. Involved in the biosynthesis of polyamines which are thought to support the growth of thermophilic microorganisms under high-temperature conditions. It seems that long-chain and branched-chain of polyamines effectively stabilize DNA and RNA, respectively. Catalyzes the decarboxylation of N1-(3-aminopropyl)agmatine to yield spermidine and urea. It can also use agmatine to yield putrescine. This Thermococcus kodakarensis (strain ATCC BAA-918 / JCM 12380 / KOD1) (Pyrococcus kodakaraensis (strain KOD1)) protein is N(1)-aminopropylagmatine ureohydrolase.